The chain runs to 334 residues: 4-hydroxyproline 2-epimerase (334 aa).

The active-site Proton acceptor is the C91. Substrate-binding positions include 92-93 (GH), H224, and D250. C254 acts as the Proton donor in catalysis. 255-256 (GT) is a binding site for substrate.

The protein belongs to the proline racemase family.

The enzyme catalyses trans-4-hydroxy-L-proline = cis-4-hydroxy-D-proline. Its function is as follows. Catalyzes the epimerization of trans-4-hydroxy-L-proline (t4LHyp) to cis-4-hydroxy-D-proline (c4DHyp). Is likely involved in a degradation pathway that converts t4LHyp to alpha-ketoglutarate. Displays no proline racemase activity. This Spirosoma linguale (strain ATCC 33905 / DSM 74 / LMG 10896 / Claus 1) protein is 4-hydroxyproline 2-epimerase.